Reading from the N-terminus, the 668-residue chain is Fructose-1,6-bisphosphatase class 3 (668 aa).

The protein belongs to the FBPase class 3 family. Mn(2+) serves as cofactor.

The enzyme catalyses beta-D-fructose 1,6-bisphosphate + H2O = beta-D-fructose 6-phosphate + phosphate. It functions in the pathway carbohydrate biosynthesis; gluconeogenesis. The polypeptide is Fructose-1,6-bisphosphatase class 3 (Clostridium botulinum (strain Langeland / NCTC 10281 / Type F)).